A 343-amino-acid chain; its full sequence is RNA-binding protein 43 (343 aa).

An RRM domain is found at 15 to 90; the sequence is RTVVVSGLPV…PLLTVSHFSE (76 aa). Residues 170–200 form a disordered region; the sequence is RRNWTGQNPRRVLQKNENSAPTLGTSVPEPA. A compositionally biased stretch (polar residues) spans 184–194; sequence KNENSAPTLGT.

The protein is RNA-binding protein 43 (Rbm43) of Rattus norvegicus (Rat).